A 290-amino-acid polypeptide reads, in one-letter code: 3-keto-disaccharide hydrolase (290 aa).

A signal peptide spans 1-19 (MKKVFYPLACCLAAGVLVS). Residue Cys-20 is the site of N-palmitoyl cysteine attachment. Cys-20 carries S-diacylglycerol cysteine lipidation.

It localises to the cell membrane. It carries out the reaction 3-dehydro-alpha,alpha-trehalose + H2O = 3-dehydro-D-glucose + D-glucose. 3-keto-disaccharide hydrolase that preferentially hydrolyzes 3-keto-trehalose (3-dehydro-alpha,alpha-trehalose). Important for disaccharide utilization in the human gut. Also shows hydrolysis activity with the glucosinolates glucoraphanin or glucobrassicin, but with much lower efficiency. The sequence is that of 3-keto-disaccharide hydrolase from Bacteroides thetaiotaomicron (strain ATCC 29148 / DSM 2079 / JCM 5827 / CCUG 10774 / NCTC 10582 / VPI-5482 / E50).